Consider the following 574-residue polypeptide: Ankyrin repeat protein B19 (574 aa).

6 ANK repeats span residues 56-87 (TGYT…DVTM), 135-164 (IKSR…DPNF), 167-213 (DGYT…NLNA), 217-249 (CGNT…NFEI), 253-285 (HGLT…NVGE), and 327-356 (EGKT…DINA). The region spanning 541–574 (NCLLTLLPSEIIYEILYMLTINDLYNISYPPTKV) is the F-box domain.

The protein belongs to the poxvirinae B18 protein family.

This Vaccinia virus (strain Western Reserve) (VACV) protein is Ankyrin repeat protein B19.